Reading from the N-terminus, the 546-residue chain is Chaperonin GroEL (546 aa).

ATP is bound by residues 30-33 (TLGP), Lys-51, 87-91 (DGTTT), Gly-415, and Asp-496. The disordered stretch occupies residues 527-546 (EKKAPAGAPGGMGGMGDMDF). Gly residues predominate over residues 534–546 (APGGMGGMGDMDF).

This sequence belongs to the chaperonin (HSP60) family. As to quaternary structure, forms a cylinder of 14 subunits composed of two heptameric rings stacked back-to-back. Interacts with the co-chaperonin GroES.

The protein resides in the cytoplasm. It carries out the reaction ATP + H2O + a folded polypeptide = ADP + phosphate + an unfolded polypeptide.. Together with its co-chaperonin GroES, plays an essential role in assisting protein folding. The GroEL-GroES system forms a nano-cage that allows encapsulation of the non-native substrate proteins and provides a physical environment optimized to promote and accelerate protein folding. In Rhodospirillum centenum (strain ATCC 51521 / SW), this protein is Chaperonin GroEL.